The chain runs to 94 residues: HssA/B-like protein 49 (94 aa).

The tract at residues 1 to 20 (MTLFSSISSISNPMTSSKSS) is disordered.

The protein belongs to the hssA/B family.

The sequence is that of HssA/B-like protein 49 (hssl49) from Dictyostelium discoideum (Social amoeba).